Consider the following 274-residue polypeptide: Kit ligand (274 aa).

The N-terminal stretch at 1-25 (MKKTQTWIITCIYLQLLLFNPLVRT) is a signal peptide. Residue Gln26 is modified to Pyrrolidone carboxylic acid. Over 26–215 (QGICRNRVTD…SDSIEDSSLQ (190 aa)) the chain is Extracellular. 2 disulfides stabilise this stretch: Cys29–Cys114 and Cys68–Cys164. Residues Asn90, Asn97, Asn145, and Asn196 are each glycosylated (N-linked (GlcNAc...) asparagine). Residues 216-238 (WAAVALPAFFSLVIGFAFGALYW) form a helical membrane-spanning segment. At 239 to 274 (KKKQPNLTRTVENIQINEEDNEISMLQEKEREFQEV) the chain is on the cytoplasmic side.

The protein belongs to the SCF family. Homodimer, non-covalently linked. Heterotetramer with KIT, binding two KIT molecules; thereby mediates KIT dimerization and subsequent activation by autophosphorylation. A soluble form is produced by proteolytic processing of the extracellular domain.

The protein localises to the cytoplasm. It is found in the cytoskeleton. The protein resides in the cell membrane. It localises to the cell projection. Its subcellular location is the lamellipodium. The protein localises to the filopodium. It is found in the secreted. Ligand for the receptor-type protein-tyrosine kinase KIT. Plays an essential role in the regulation of cell survival and proliferation, hematopoiesis, stem cell maintenance, gametogenesis, mast cell development, migration and function, and in melanogenesis. KITLG/SCF binding can activate several signaling pathways. Promotes phosphorylation of PIK3R1, the regulatory subunit of phosphatidylinositol 3-kinase, and subsequent activation of the kinase AKT1. KITLG/SCF and KIT also transmit signals via GRB2 and activation of RAS, RAF1 and the MAP kinases MAPK1/ERK2 and/or MAPK3/ERK1. KITLG/SCF and KIT promote activation of STAT family members STAT1, STAT3 and STAT5. KITLG/SCF and KIT promote activation of PLCG1, leading to the production of the cellular signaling molecules diacylglycerol and inositol 1,4,5-trisphosphate. KITLG/SCF acts synergistically with other cytokines, probably interleukins. This Sus scrofa (Pig) protein is Kit ligand (KITLG).